Reading from the N-terminus, the 255-residue chain is BTB/POZ domain-containing protein kctd15 (255 aa).

A BTB domain is found at 30 to 100; the sequence is APVHIDVGGH…LRTSKLLLPE (71 aa).

Forms oligomers, predominantly homopentamers. Interacts with TFAP2A; this interaction inhibits TFAP2A transcriptional activation.

The protein localises to the nucleus. Its function is as follows. During embryonic development, interferes with neural crest formation. Inhibits AP2 transcriptional activity by interaction with its activation domain. The protein is BTB/POZ domain-containing protein kctd15 (kctd15) of Xenopus tropicalis (Western clawed frog).